Here is a 301-residue protein sequence, read N- to C-terminus: MSSLPKNFLQPLPLQPGDRLTVVSPSGSLRELADLQKGVDIWRSWGYEVIFSQGYHNRFGYLAGTDQQRRQDLLHAWLDPQCKGILCSRGGYGSARLLEDWQWPAISQPKWVLGFSDVTGILWSLLKSGIISLHGPVLTTLSDEPDWALERLRGHLQGLPLAPLTGNSWQKGMARGRLVAGNLTVATHFLGTEWQPDFENVILAIEDVTESPYRIDRMVTQWRASGNLSQVAGIALGRFSECEAPAGFPSWTVEEVLGDRLGDLGIPVVADLPFGHGGVNAILPVGSKAELDGDAGTLSFL.

Serine 116 serves as the catalytic Nucleophile. Catalysis depends on charge relay system residues glutamate 206 and histidine 276.

It belongs to the peptidase S66 family.

The sequence is that of Putative carboxypeptidase slr1534 from Synechocystis sp. (strain ATCC 27184 / PCC 6803 / Kazusa).